The primary structure comprises 71 residues: Peptide Ctri10261 (71 aa).

Residues 1–23 form the signal peptide; sequence MKIPLILVTIAIILLMVPTESDA. Phe-37 is subject to Phenylalanine amide. Positions 41 to 71 are excised as a propeptide; that stretch reads SLKNRDYFDYMQDPSLSNADLRELEELLEDY.

The protein belongs to the non-disulfide-bridged peptide (NDBP) superfamily. Short antimicrobial peptide (group 4) family. As to expression, expressed by the venom gland.

The protein localises to the secreted. Antimicrobial peptide. This Chaerilus tricostatus (Scorpion) protein is Peptide Ctri10261.